The following is a 429-amino-acid chain: Glutamate-1-semialdehyde 2,1-aminomutase (429 aa).

K268 is modified (N6-(pyridoxal phosphate)lysine).

This sequence belongs to the class-III pyridoxal-phosphate-dependent aminotransferase family. HemL subfamily. In terms of assembly, homodimer. Pyridoxal 5'-phosphate serves as cofactor.

The protein localises to the cytoplasm. It catalyses the reaction (S)-4-amino-5-oxopentanoate = 5-aminolevulinate. Its pathway is porphyrin-containing compound metabolism; protoporphyrin-IX biosynthesis; 5-aminolevulinate from L-glutamyl-tRNA(Glu): step 2/2. This is Glutamate-1-semialdehyde 2,1-aminomutase from Serratia proteamaculans (strain 568).